The primary structure comprises 232 residues: tRNA (guanine-N(1)-)-methyltransferase (232 aa).

Residues glycine 112 and 132–137 contribute to the S-adenosyl-L-methionine site; that span reads IGDYVL.

This sequence belongs to the RNA methyltransferase TrmD family. Homodimer.

It is found in the cytoplasm. It carries out the reaction guanosine(37) in tRNA + S-adenosyl-L-methionine = N(1)-methylguanosine(37) in tRNA + S-adenosyl-L-homocysteine + H(+). Functionally, specifically methylates guanosine-37 in various tRNAs. In Anaplasma phagocytophilum (strain HZ), this protein is tRNA (guanine-N(1)-)-methyltransferase.